A 122-amino-acid polypeptide reads, in one-letter code: Large ribosomal subunit protein uL18 (122 aa).

It belongs to the universal ribosomal protein uL18 family. In terms of assembly, part of the 50S ribosomal subunit; part of the 5S rRNA/L5/L18/L25 subcomplex. Contacts the 5S and 23S rRNAs.

This is one of the proteins that bind and probably mediate the attachment of the 5S RNA into the large ribosomal subunit, where it forms part of the central protuberance. This Acetivibrio thermocellus (strain ATCC 27405 / DSM 1237 / JCM 9322 / NBRC 103400 / NCIMB 10682 / NRRL B-4536 / VPI 7372) (Clostridium thermocellum) protein is Large ribosomal subunit protein uL18.